Reading from the N-terminus, the 88-residue chain is Small ribosomal subunit protein uS15 (88 aa).

This sequence belongs to the universal ribosomal protein uS15 family. As to quaternary structure, part of the 30S ribosomal subunit. Forms a bridge to the 50S subunit in the 70S ribosome, contacting the 23S rRNA.

Its function is as follows. One of the primary rRNA binding proteins, it binds directly to 16S rRNA where it helps nucleate assembly of the platform of the 30S subunit by binding and bridging several RNA helices of the 16S rRNA. Forms an intersubunit bridge (bridge B4) with the 23S rRNA of the 50S subunit in the ribosome. This is Small ribosomal subunit protein uS15 from Mycoplasma mycoides subsp. mycoides SC (strain CCUG 32753 / NCTC 10114 / PG1).